A 190-amino-acid chain; its full sequence is dTTP/UTP pyrophosphatase (190 aa).

The active-site Proton acceptor is D70.

The protein belongs to the Maf family. YhdE subfamily. A divalent metal cation serves as cofactor.

The protein localises to the cytoplasm. It carries out the reaction dTTP + H2O = dTMP + diphosphate + H(+). The enzyme catalyses UTP + H2O = UMP + diphosphate + H(+). Nucleoside triphosphate pyrophosphatase that hydrolyzes dTTP and UTP. May have a dual role in cell division arrest and in preventing the incorporation of modified nucleotides into cellular nucleic acids. The chain is dTTP/UTP pyrophosphatase from Paramagnetospirillum magneticum (strain ATCC 700264 / AMB-1) (Magnetospirillum magneticum).